A 142-amino-acid chain; its full sequence is MIKKDKNELNEMEYLVTQENGTEPPFQNEYWNHFDKGIYVDKISGKPLFTSEEKFESNCGWPSFSKSIDDDEIIELVDKTFGMIRTEVRSEDANSHLGHVFNDGPKESGGLRYCINSAAIQFIPYDKLEELGYGDLIPHFEK.

A MsrB domain is found at 2-125; the sequence is IKKDKNELNE…NSAAIQFIPY (124 aa). The active-site Nucleophile is the Cys114.

It belongs to the MsrB Met sulfoxide reductase family.

The enzyme catalyses L-methionyl-[protein] + [thioredoxin]-disulfide + H2O = L-methionyl-(R)-S-oxide-[protein] + [thioredoxin]-dithiol. This is Peptide methionine sulfoxide reductase MsrB from Staphylococcus haemolyticus (strain JCSC1435).